A 404-amino-acid polypeptide reads, in one-letter code: MNQADLTERSDALQEQILNLYEQDSKDIQAQIQYWDLNRKLYVTYYYARKEGYSHLGLQPLPALQVSEYKAKQAIEMGLLLTSLSKSQYASELWGLTDTSAELLLTPPRNTFKKKGYTVNVWFDNNENNTFPYTNWEYIYYQDDIEQWHRTRGEVDYNGLYFTENNGNRAYFLLFDSDAQTYSQTGTWTVHYKNQIISAPVTSSSKQSSDDYTSKAGQQPHFFASSSSPTTTDGGQTSQEGVSSSTTSPSAVRLRRRRSNEQQRELSSRESPRTKRRRVPDEVDRQSAVGSAPTAEEVGSRHRSLPRSGISRLARLQGEARDPPILLIKGLANSLKCWRYRLKKYTRYFKCMSTVFRWVDIDVPESSRHKLLVVFNDTTQRDVFMKLVTLPRGCTYTFGTLNSL.

Residues 1 to 204 form a transactivation domain region; it reads MNQADLTERS…QIISAPVTSS (204 aa). A disordered region spans residues 201 to 306; sequence VTSSSKQSSD…EVGSRHRSLP (106 aa). The span at 224-250 shows a compositional bias: polar residues; it reads ASSSSPTTTDGGQTSQEGVSSSTTSPS. Positions 259–285 are enriched in basic and acidic residues; it reads SNEQQRELSSRESPRTKRRRVPDEVDR. The interval 322 to 404 is DNA-binding domain; sequence DPPILLIKGL…TYTFGTLNSL (83 aa). Residue K329 forms a Glycyl lysine isopeptide (Lys-Gly) (interchain with G-Cter in SUMO) linkage.

It belongs to the papillomaviridae E2 protein family. In terms of assembly, binds DNA as homodimer. Interacts with protein E1; this interaction greatly increases E1 DNA-binding activity. Interacts with protein L1; this interaction enhances E2-dependent replication and transcription activation. Interacts with protein L2; this interaction inhibits E2 transcriptional activity but not DNA replication function E2. Interacts with protein E7; this interaction inhibits E7 oncogenic activity. Interacts with host TAF1; this interaction modulates E2-dependent transcriptional regulation. Interacts with host BRD4; this interaction mediates E2 transcriptional activation function. Additionally, the interaction with host BRD4 on mitotic chromosomes mediates tethering of the viral genome. Interacts with host TOPBP1; this interaction is required for optimal viral DNA replication. Post-translationally, phosphorylated. Sumoylation plays a regulatory role in E2 transcriptional activity.

The protein localises to the host nucleus. Its function is as follows. Plays a role in the initiation of viral DNA replication. A dimer of E2 interacts with a dimer of E1 in order to improve specificity of E1 DNA binding activity. Once the complex recognizes and binds DNA at specific sites, the E2 dimer is removed from DNA. E2 also regulates viral transcription through binding to the E2RE response element (5'-ACCNNNNNNGGT-3') present in multiple copies in the regulatory regions of the viral genome. Activates or represses transcription depending on E2RE's position with regards to proximal promoter elements including the TATA-box. Repression occurs by sterically hindering the assembly of the transcription initiation complex. The chain is Regulatory protein E2 from Homo sapiens (Human).